Here is a 183-residue protein sequence, read N- to C-terminus: Large ribosomal subunit protein uL5 (183 aa).

It belongs to the universal ribosomal protein uL5 family. As to quaternary structure, part of the 50S ribosomal subunit; part of the 5S rRNA/L5/L18/L25 subcomplex. Contacts the 5S rRNA and the P site tRNA. Forms a bridge to the 30S subunit in the 70S ribosome.

This is one of the proteins that bind and probably mediate the attachment of the 5S RNA into the large ribosomal subunit, where it forms part of the central protuberance. In the 70S ribosome it contacts protein S13 of the 30S subunit (bridge B1b), connecting the 2 subunits; this bridge is implicated in subunit movement. Contacts the P site tRNA; the 5S rRNA and some of its associated proteins might help stabilize positioning of ribosome-bound tRNAs. The chain is Large ribosomal subunit protein uL5 from Christiangramia forsetii (strain DSM 17595 / CGMCC 1.15422 / KT0803) (Gramella forsetii).